The following is a 562-amino-acid chain: Serine/threonine-protein kinase dst3 (562 aa).

The region spanning 23–285 (FQIVEVVGSG…AQQLLSHPFI (263 aa)) is the Protein kinase domain. Residues 29 to 37 (VGSGSFGTV) and Lys59 contribute to the ATP site. Catalysis depends on Asp154, which acts as the Proton acceptor. Disordered regions lie at residues 316 to 339 (LEEQ…TRAS) and 366 to 562 (SIMR…NVNI). Over residues 322–339 (QRNSSGSKMVSSVPTRAS) the composition is skewed to polar residues. 3 stretches are compositionally biased toward low complexity: residues 421-431 (NNNNNNNNTTT), 442-454 (QQQQ…NNNK), and 476-494 (TTPT…TTKT). Positions 495–522 (GSSLNIKPTNNVNRSTISIGQQKSPLQS) are enriched in polar residues. The span at 542-562 (EDEEDEEEFNHEDYEEINVNI) shows a compositional bias: acidic residues.

Belongs to the protein kinase superfamily. STE Ser/Thr protein kinase family. STE20 subfamily. Requires Mg(2+) as cofactor.

The catalysed reaction is L-seryl-[protein] + ATP = O-phospho-L-seryl-[protein] + ADP + H(+). It catalyses the reaction L-threonyl-[protein] + ATP = O-phospho-L-threonyl-[protein] + ADP + H(+). The sequence is that of Serine/threonine-protein kinase dst3 from Dictyostelium discoideum (Social amoeba).